The sequence spans 395 residues: Flavohemoprotein (395 aa).

The 136-residue stretch at 1-136 (MLDQQTIATI…LANVFIQRES (136 aa)) folds into the Globin domain. A heme b-binding site is contributed by histidine 85. Residues tyrosine 95 and glutamate 135 each act as charge relay system in the active site. Positions 147–395 (GGWHGIRPFR…YECFGPHKVI (249 aa)) are reductase. In terms of domain architecture, FAD-binding FR-type spans 150-255 (HGIRPFRIVA…AAPHGDFYLE (106 aa)). FAD-binding positions include tyrosine 188 and 204 to 207 (RQYS). Residue 268–273 (GVGQTP) coordinates NADP(+). 388–391 (CFGP) serves as a coordination point for FAD.

It belongs to the globin family. Two-domain flavohemoproteins subfamily. In the C-terminal section; belongs to the flavoprotein pyridine nucleotide cytochrome reductase family. Requires heme b as cofactor. It depends on FAD as a cofactor.

The protein resides in the cytoplasm. It catalyses the reaction 2 nitric oxide + NADPH + 2 O2 = 2 nitrate + NADP(+) + H(+). The catalysed reaction is 2 nitric oxide + NADH + 2 O2 = 2 nitrate + NAD(+) + H(+). Is involved in NO detoxification in an aerobic process, termed nitric oxide dioxygenase (NOD) reaction that utilizes O(2) and NAD(P)H to convert NO to nitrate, which protects the bacterium from various noxious nitrogen compounds. Therefore, plays a central role in the inducible response to nitrosative stress. This Dickeya dadantii (strain 3937) (Erwinia chrysanthemi (strain 3937)) protein is Flavohemoprotein (hmp).